The sequence spans 129 residues: Lysozyme C (129 aa).

The C-type lysozyme domain occupies 1-129; that stretch reads KIYTRCELAA…VSKWIKDCKL (129 aa). 4 cysteine pairs are disulfide-bonded: C6/C127, C30/C115, C64/C80, and C76/C94. Catalysis depends on residues E35 and D52.

Belongs to the glycosyl hydrolase 22 family. In terms of assembly, monomer.

It is found in the secreted. The enzyme catalyses Hydrolysis of (1-&gt;4)-beta-linkages between N-acetylmuramic acid and N-acetyl-D-glucosamine residues in a peptidoglycan and between N-acetyl-D-glucosamine residues in chitodextrins.. Its function is as follows. Lysozymes have primarily a bacteriolytic function; those in tissues and body fluids are associated with the monocyte-macrophage system and enhance the activity of immunoagents. The sequence is that of Lysozyme C (LYZ) from Crax fasciolata (Bare-faced curassow).